The chain runs to 25 residues: Small ribosomal subunit protein eS32 eS32z/eS32y/eS32x/eS32w/eS32v (25 aa).

A disordered region spans residues 1 to 25; it reads MRAKWKKKRMRRLKRKRRKMRQRSK.

It belongs to the eukaryotic ribosomal protein eS32 family. Component of the small ribosomal subunit (SSU).

In Arabidopsis thaliana (Mouse-ear cress), this protein is Small ribosomal subunit protein eS32 eS32z/eS32y/eS32x/eS32w/eS32v (RPL41A).